The primary structure comprises 608 residues: Extracellular metalloproteinase 5 (608 aa).

An N-terminal signal peptide occupies residues 1-20 (MHGLLLAAAGLLSLPLHVIA). Residues 21 to 244 (HPQPSTNLAG…VHNVVDYVSH (224 aa)) constitute a propeptide that is removed on maturation. An N-linked (GlcNAc...) asparagine glycan is attached at N285. Residue H427 participates in Zn(2+) binding. Residue E428 is part of the active site. Residue H431 participates in Zn(2+) binding. An N-linked (GlcNAc...) asparagine glycan is attached at N591.

The protein belongs to the peptidase M36 family. Zn(2+) is required as a cofactor.

The protein resides in the secreted. Secreted metalloproteinase probably acting as a virulence factor. In Trichophyton tonsurans (Scalp ringworm fungus), this protein is Extracellular metalloproteinase 5 (MEP5).